The following is a 580-amino-acid chain: Arginine--tRNA ligase (580 aa).

The 'HIGH' region signature appears at 123–133 (PNLAKEMHVGH).

The protein belongs to the class-I aminoacyl-tRNA synthetase family. Monomer.

It is found in the cytoplasm. It carries out the reaction tRNA(Arg) + L-arginine + ATP = L-arginyl-tRNA(Arg) + AMP + diphosphate. This Pseudoalteromonas translucida (strain TAC 125) protein is Arginine--tRNA ligase.